A 579-amino-acid chain; its full sequence is DELLA protein GAIP (579 aa).

Residues 1-25 (MKREHHYLHPRPEPPSVATGSNRES) are disordered. The short motif at 46–50 (DELLA) is the DELLA motif element. A GRAS domain is found at 202–570 (VDSQENGIQL…RPLIATSAWK (369 aa)). Residues 209–263 (IQLVHALMVCAEAVQQNNLNLAEALVKRIDYLAVSQAGAMRKVATFFAEALARRI) are leucine repeat I (LRI). The segment at 281 to 346 (QMHFYESCPY…SGPPTFRLTG (66 aa)) is VHIID. The VHIID motif lies at 312–316 (VHVID). Residues 360-392 (DVGWKLVKFAETLHVEFEYRGFVANSLADLDAS) form a leucine repeat II (LRII) region. The PFYRE stretch occupies residues 404-491 (VVVNSVFELH…EMYLGKQICN (88 aa)). The LXXLL motif motif lies at 412 to 416 (LHQLL). The segment at 494 to 570 (ACEGADRVER…RPLIATSAWK (77 aa)) is SAW.

The protein belongs to the GRAS family. DELLA subfamily. Phosphorylated. Post-translationally, ubiquitinated. Upon GA application it is ubiquitinated, leading to its subsequent degradation.

It localises to the nucleus. In terms of biological role, probable transcriptional regulator that acts as a repressor of the gibberellin (GA) signaling pathway. Probably acts by participating in large multiprotein complexes that represses transcription of GA-inducible genes. Upon GA application, it is degraded by the proteasome, allowing the GA signaling pathway. The protein is DELLA protein GAIP (GAIP) of Cucurbita maxima (Pumpkin).